A 594-amino-acid polypeptide reads, in one-letter code: MYSPKRVKLNVTSGMRKRPETGENNDDLYPPTALARNGISPYFIGKPRRKIVVETPSDSAQQQPPFKSRSQQNGLDDELDGIIIDEDEDRTVDVSFSQKQDTRKLKSRPFLGEKSSFKLGEIPKPKEEKRREEPFTMRGFDFGSDDKVTKIRDKICDIVDPTNARRTDPNFIRQMHENTLKGIEVASNPHFKKTRAPTKNRAAIQNTLGTLYPSFTTAAGQDPQNSKFQVPLDRQSSSQSIGSLAGIPPARRAPDIPKRCSNPLIRKAMGMDTEGGGKDEKMSGLRAEPTLKHFDENIISLIESEIMSVNNEIGWADVAGLEGAKKALREIVVLPFKRPDVFTGIRAPPKGVLLFGPPGTGKTMIGRCVASQCKATFFNISASSLTSKWVGEGEKLVRALFSVARLKLPSVIFIDEIDSLLSSRSESEHESSRRIKTEFLVQLDGVNTAPDERLLVLGATNRPQELDEAARRRFQKRLYIALPEPESRTQIVQNLLVGTRHDITNHNLERIRELTDGYSGADMRQLCTEAAMGPIRDIGDDIETIDKDDIRAVTVMDFAEAARVVRPTVDDSQLDAYAAWDKKFGCLPPPSISR.

Disordered stretches follow at residues 1–79 (MYSP…DDEL) and 239–261 (QSIGSLAGIPPARRAPDIPKRCS). A compositionally biased stretch (polar residues) spans 56-73 (PSDSAQQQPPFKSRSQQN). ATP-binding positions include alanine 319 and 359 to 364 (GTGKTM).

This sequence belongs to the AAA ATPase family. Hexamer. The cofactor is Mg(2+). As to expression, expressed in germ cells.

The protein localises to the nucleus. The enzyme catalyses ATP + H2O = ADP + phosphate + H(+). Has a role in spindle assembly which acts in the progression through mitosis during embryogenesis. Required for fertility. The sequence is that of Fidgetin-like protein 1 (figl-1) from Caenorhabditis elegans.